A 305-amino-acid polypeptide reads, in one-letter code: tRNA uridine(34) hydroxylase (305 aa).

The region spanning 125–219 (ADENTVVVDT…YLEEVPREQS (95 aa)) is the Rhodanese domain. Catalysis depends on Cys179, which acts as the Cysteine persulfide intermediate.

It belongs to the TrhO family.

The enzyme catalyses uridine(34) in tRNA + AH2 + O2 = 5-hydroxyuridine(34) in tRNA + A + H2O. Its function is as follows. Catalyzes oxygen-dependent 5-hydroxyuridine (ho5U) modification at position 34 in tRNAs. The chain is tRNA uridine(34) hydroxylase from Brucella suis (strain ATCC 23445 / NCTC 10510).